Reading from the N-terminus, the 289-residue chain is ATP synthase gamma chain (289 aa).

This sequence belongs to the ATPase gamma chain family. As to quaternary structure, F-type ATPases have 2 components, CF(1) - the catalytic core - and CF(0) - the membrane proton channel. CF(1) has five subunits: alpha(3), beta(3), gamma(1), delta(1), epsilon(1). CF(0) has three main subunits: a, b and c.

It is found in the cell membrane. Functionally, produces ATP from ADP in the presence of a proton gradient across the membrane. The gamma chain is believed to be important in regulating ATPase activity and the flow of protons through the CF(0) complex. This is ATP synthase gamma chain from Lawsonia intracellularis (strain PHE/MN1-00).